Consider the following 457-residue polypeptide: Tubulin beta chain (457 aa).

Residues Gln-11, Glu-69, Ser-138, Gly-142, Thr-143, Gly-144, Asn-204, and Asn-226 each coordinate GTP. Residue Glu-69 participates in Mg(2+) binding. 2 positions are modified to phosphoserine: Ser-278 and Ser-280. Residues 423 to 457 form a disordered region; that stretch reads QQYQEATVEDDEEVDENGDFGAPQNQDEPITENFE. Over residues 429 to 440 the composition is skewed to acidic residues; sequence TVEDDEEVDENG.

It belongs to the tubulin family. Dimer of alpha and beta chains. A typical microtubule is a hollow water-filled tube with an outer diameter of 25 nm and an inner diameter of 15 nM. Alpha-beta heterodimers associate head-to-tail to form protofilaments running lengthwise along the microtubule wall with the beta-tubulin subunit facing the microtubule plus end conferring a structural polarity. Microtubules usually have 13 protofilaments but different protofilament numbers can be found in some organisms and specialized cells. Mg(2+) is required as a cofactor.

It localises to the cytoplasm. It is found in the cytoskeleton. Its function is as follows. Tubulin is the major constituent of microtubules, a cylinder consisting of laterally associated linear protofilaments composed of alpha- and beta-tubulin heterodimers. Microtubules grow by the addition of GTP-tubulin dimers to the microtubule end, where a stabilizing cap forms. Below the cap, tubulin dimers are in GDP-bound state, owing to GTPase activity of alpha-tubulin. This Saccharomyces cerevisiae (strain ATCC 204508 / S288c) (Baker's yeast) protein is Tubulin beta chain (TUB2).